The primary structure comprises 149 residues: Endoribonuclease YbeY (149 aa).

3 residues coordinate Zn(2+): histidine 116, histidine 120, and histidine 126.

Belongs to the endoribonuclease YbeY family. It depends on Zn(2+) as a cofactor.

The protein resides in the cytoplasm. Functionally, single strand-specific metallo-endoribonuclease involved in late-stage 70S ribosome quality control and in maturation of the 3' terminus of the 16S rRNA. The protein is Endoribonuclease YbeY of Nocardioides sp. (strain ATCC BAA-499 / JS614).